Reading from the N-terminus, the 179-residue chain is Signal peptidase complex catalytic subunit sec11 (179 aa).

Topologically, residues methionine 1–glutamine 22 are cytoplasmic. Residues isoleucine 23–phenylalanine 43 form a helical; Signal-anchor for type II membrane protein membrane-spanning segment. Residues serine 44–glutamate 179 are Lumenal-facing. Catalysis depends on charge relay system residues serine 57, histidine 96, and aspartate 122. Positions phenylalanine 165–serine 176 are C-terminal short (CTS) helix.

It belongs to the peptidase S26B family. Component of the signal peptidase complex (SPC) composed of a catalytic subunit sec11 and three accessory subunits spcs1, spcs2 and spcs3. The complex induces a local thinning of the ER membrane which is used to measure the length of the signal peptide (SP) h-region of protein substrates. This ensures the selectivity of the complex towards h-regions shorter than 18-20 amino acids.

It localises to the endoplasmic reticulum membrane. It catalyses the reaction Cleavage of hydrophobic, N-terminal signal or leader sequences from secreted and periplasmic proteins.. Catalytic component of the signal peptidase complex (SPC) which catalyzes the cleavage of N-terminal signal sequences from nascent proteins as they are translocated into the lumen of the endoplasmic reticulum. Specifically cleaves N-terminal signal peptides that contain a hydrophobic alpha-helix (h-region) shorter than 18-20 amino acids. In Dictyostelium discoideum (Social amoeba), this protein is Signal peptidase complex catalytic subunit sec11 (sec11).